Reading from the N-terminus, the 319-residue chain is Coproporphyrin III ferrochelatase 2 (319 aa).

Fe-coproporphyrin III is bound by residues tyrosine 13, arginine 30, 46 to 47 (RY), serine 54, and tyrosine 125. 2 residues coordinate Fe(2+): histidine 181 and glutamate 262.

Belongs to the ferrochelatase family.

It localises to the cytoplasm. It carries out the reaction Fe-coproporphyrin III + 2 H(+) = coproporphyrin III + Fe(2+). It participates in porphyrin-containing compound metabolism; protoheme biosynthesis. In terms of biological role, involved in coproporphyrin-dependent heme b biosynthesis. Catalyzes the insertion of ferrous iron into coproporphyrin III to form Fe-coproporphyrin III. The sequence is that of Coproporphyrin III ferrochelatase 2 from Bacillus thuringiensis subsp. konkukian (strain 97-27).